Consider the following 115-residue polypeptide: Large ribosomal subunit protein bL20 (115 aa).

This sequence belongs to the bacterial ribosomal protein bL20 family.

Functionally, binds directly to 23S ribosomal RNA and is necessary for the in vitro assembly process of the 50S ribosomal subunit. It is not involved in the protein synthesizing functions of that subunit. The sequence is that of Large ribosomal subunit protein bL20 from Prochlorococcus marinus (strain MIT 9215).